The primary structure comprises 397 residues: Serpin B10 (397 aa).

The Nuclear localization signal signature appears at 74–77 (KKRK).

The protein belongs to the serpin family. Ov-serpin subfamily.

It is found in the nucleus. The protein localises to the cytoplasm. In terms of biological role, protease inhibitor that may play a role in the regulation of protease activities during hematopoiesis and apoptosis induced by TNF. May regulate protease activities in the cytoplasm and in the nucleus. The protein is Serpin B10 (Serpinb10) of Mus musculus (Mouse).